We begin with the raw amino-acid sequence, 198 residues long: FMN-dependent NADH:quinone oxidoreductase 6 (198 aa).

An FMN-binding site is contributed by 96–99; that stretch reads MYNF.

It belongs to the azoreductase type 1 family. Homodimer. The cofactor is FMN.

It catalyses the reaction 2 a quinone + NADH + H(+) = 2 a 1,4-benzosemiquinone + NAD(+). The catalysed reaction is N,N-dimethyl-1,4-phenylenediamine + anthranilate + 2 NAD(+) = 2-(4-dimethylaminophenyl)diazenylbenzoate + 2 NADH + 2 H(+). Its function is as follows. Quinone reductase that provides resistance to thiol-specific stress caused by electrophilic quinones. In terms of biological role, also exhibits azoreductase activity. Catalyzes the reductive cleavage of the azo bond in aromatic azo compounds to the corresponding amines. The protein is FMN-dependent NADH:quinone oxidoreductase 6 of Burkholderia lata (strain ATCC 17760 / DSM 23089 / LMG 22485 / NCIMB 9086 / R18194 / 383).